We begin with the raw amino-acid sequence, 86 residues long: Large ribosomal subunit protein bL27 (86 aa).

A disordered region spans residues 1-26; the sequence is MATKKAGGSSRNGRDSAGRRLGVKKS.

It belongs to the bacterial ribosomal protein bL27 family.

The protein is Large ribosomal subunit protein bL27 of Rickettsia akari (strain Hartford).